The chain runs to 257 residues: Nuclear receptor subfamily 0 group B member 2 (257 aa).

The NR LBD domain maps to 16–257 (SRPAILYALL…GLLGDMLLLR (242 aa)). Symmetric dimethylarginine; by PRMT5 is present on R57.

Belongs to the nuclear hormone receptor family. NR0 subfamily. In terms of assembly, interacts (via N-terminus) with NEUROD1 (via N-terminus and C-terminus). Interacts with ID2. Interacts with RORG, NFIL3, NR1D1 and BHLHE41. Heterodimer; efficient DNA binding requires dimerization with another bHLH protein. Interacts with RARA, RXRA, THRB, NR5A1, NR5A2, NR1I3, PPARA, PPARG and EID1. Interacts with HNF4A; the resulting heterodimer is transcriptionally inactive. Interacts with DDX3X; this interaction disrupts the interaction between HNF4 and NR0B2/SHP that forms inactive heterodimers and enhances the formation of active HNF4 homodimers. Arginine methylation by PRMT5 enhances repression activity of metabolic genes in liver in response to bile acid signaling, by increasing interaction with cofactors. In terms of tissue distribution, liver. Low levels of expression were detected in heart and pancreas.

The protein resides in the nucleus. It is found in the cytoplasm. Functionally, transcriptional regulator that acts as a negative regulator of receptor-dependent signaling pathways. Specifically inhibits transactivation of the nuclear receptor with which it interacts. Inhibits transcriptional activity of NEUROD1 on E-box-containing promoter by interfering with the coactivation function of the p300/CBP-mediated transcription complex for NEUROD1. Essential component of the liver circadian clock which via its interaction with NR1D1 and RORG regulates NPAS2-mediated hepatic lipid metabolism. Regulates the circadian expression of cytochrome P450 (CYP) enzymes. Represses: NR5A2 and HNF4A to down-regulate CYP2C38, NFLI3 to up-regulate CYP2A5, BHLHE41/HNF1A axis to up-regulate CYP1A2, CYP2E1 and CYP3A11, and NR1D1 to up-regulate CYP2B10, CYP4A10 and CYP4A14. The polypeptide is Nuclear receptor subfamily 0 group B member 2 (NR0B2) (Homo sapiens (Human)).